Here is a 620-residue protein sequence, read N- to C-terminus: MSFDIAKYPTLALVDSPQELRLLPKESLPKLCDELRRYLLDSVSRSSGHFASGLGTVELTVALHYVYNTPFDQLIWDVGHQAYPHKILTGRRDKIGTIRQKGGLHPFPWRGESEYDVLSVGHSSTSISAGIGIAVAAEKEGKNRRTVCVIGDGAITAGMAFEAMNHAGDIRPDMLVVLNDNEMSISENVGALNNHLAQLLSGKLYSSLREGGKKVFSGVPPIKELLKRTEEHIKGMVVPGTLFEELGFNYIGPVDGHDVLGLITTLKNMRDLKGPQFLHIMTKKGRGYEPAEKDPITFHAVPKFDPSSGCLPKSSGGLPSYSKIFGDWLCETAAKDSKLMAITPAMREGSGMVEFSRKFPDRYFDVAIAEQHAVTFAAGLAIGGYKPIVAIYSTFLQRAYDQVLHDVAIQKLPVLFAIDRAGIVGADGQTHQGAFDLSYLRCIPEMVIMTPSDENECRQMLYTGYHYNDGPSAVRYPRGNAVGVELTPLEKLPIGKGIVKRRGEKLAILNFGTLMPEAAKVAESLNATLVDMRFVKPLDEALILEMAASHEALITIEENAIMGGAGSGVNEVLMAHRKPVPVLNIGLPDFFIPQGTQEEMRAELGLDAAGMEAKIKAWLA.

Thiamine diphosphate is bound by residues H80 and 121–123 (GHS). D152 provides a ligand contact to Mg(2+). Thiamine diphosphate contacts are provided by residues 153–154 (GA), N181, Y288, and E370. N181 is a Mg(2+) binding site.

It belongs to the transketolase family. DXPS subfamily. Homodimer. Mg(2+) serves as cofactor. Thiamine diphosphate is required as a cofactor.

The catalysed reaction is D-glyceraldehyde 3-phosphate + pyruvate + H(+) = 1-deoxy-D-xylulose 5-phosphate + CO2. It participates in metabolic intermediate biosynthesis; 1-deoxy-D-xylulose 5-phosphate biosynthesis; 1-deoxy-D-xylulose 5-phosphate from D-glyceraldehyde 3-phosphate and pyruvate: step 1/1. Its function is as follows. Catalyzes the acyloin condensation reaction between C atoms 2 and 3 of pyruvate and glyceraldehyde 3-phosphate to yield 1-deoxy-D-xylulose-5-phosphate (DXP). The chain is 1-deoxy-D-xylulose-5-phosphate synthase from Escherichia fergusonii (strain ATCC 35469 / DSM 13698 / CCUG 18766 / IAM 14443 / JCM 21226 / LMG 7866 / NBRC 102419 / NCTC 12128 / CDC 0568-73).